Consider the following 238-residue polypeptide: Endonuclease III homolog (238 aa).

The region spanning 129–155 (REKGLPREMKDLISLPGIGNKMALLYM) is the HhH domain. K149 acts as the Nucleophile; for N-glycosylase activity in catalysis. [4Fe-4S] cluster is bound by residues C217, C224, C227, and C233.

Belongs to the Nth/MutY family. [4Fe-4S] cluster is required as a cofactor.

It is found in the nucleus. The protein localises to the mitochondrion. The enzyme catalyses 2'-deoxyribonucleotide-(2'-deoxyribose 5'-phosphate)-2'-deoxyribonucleotide-DNA = a 3'-end 2'-deoxyribonucleotide-(2,3-dehydro-2,3-deoxyribose 5'-phosphate)-DNA + a 5'-end 5'-phospho-2'-deoxyribonucleoside-DNA + H(+). Functionally, bifunctional DNA N-glycosylase with associated apurinic/apyrimidinic (AP) lyase function that catalyzes the first step in base excision repair (BER), the primary repair pathway for the repair of oxidative DNA damage. The DNA N-glycosylase activity releases the damaged DNA base from DNA by cleaving the N-glycosidic bond, leaving an AP site. The AP lyase activity cleaves the phosphodiester bond 3' to the AP site by a beta-elimination. Primarily recognizes and repairs oxidative base damage of pyrimidines. This is Endonuclease III homolog from Encephalitozoon cuniculi (strain GB-M1) (Microsporidian parasite).